The sequence spans 919 residues: Beta-galactosidase 15 (919 aa).

The signal sequence occupies residues 1-31; sequence MAASRGPPLLGFRALALALLLAILLLLGCSA. Asparagine 63 is a glycosylation site (N-linked (GlcNAc...) asparagine). Glutamate 220 acts as the Proton donor in catalysis. Glutamate 289 (nucleophile) is an active-site residue. 4 N-linked (GlcNAc...) asparagine glycosylation sites follow: asparagine 412, asparagine 530, asparagine 546, and asparagine 855. The SUEL-type lectin domain occupies 822 to 907; sequence NAATPELRLQ…KDLAVEAKCS (86 aa).

Belongs to the glycosyl hydrolase 35 family.

It localises to the secreted. Its subcellular location is the extracellular space. The protein localises to the apoplast. It catalyses the reaction Hydrolysis of terminal non-reducing beta-D-galactose residues in beta-D-galactosides.. In Oryza sativa subsp. japonica (Rice), this protein is Beta-galactosidase 15.